Consider the following 207-residue polypeptide: Proteasome subunit beta (207 aa).

Residues 1 to 9 (MSNKNTFEG) constitute a propeptide, removed in mature form; by autocatalysis. Thr10 functions as the Nucleophile in the catalytic mechanism.

This sequence belongs to the peptidase T1B family. In terms of assembly, the 20S proteasome core is composed of 14 alpha and 14 beta subunits that assemble into four stacked heptameric rings, resulting in a barrel-shaped structure. The two inner rings, each composed of seven catalytic beta subunits, are sandwiched by two outer rings, each composed of seven alpha subunits. The catalytic chamber with the active sites is on the inside of the barrel. Has a gated structure, the ends of the cylinder being occluded by the N-termini of the alpha-subunits. Is capped at one or both ends by the proteasome regulatory ATPase, PAN.

The protein localises to the cytoplasm. The catalysed reaction is Cleavage of peptide bonds with very broad specificity.. With respect to regulation, the formation of the proteasomal ATPase PAN-20S proteasome complex, via the docking of the C-termini of PAN into the intersubunit pockets in the alpha-rings, triggers opening of the gate for substrate entry. Interconversion between the open-gate and close-gate conformations leads to a dynamic regulation of the 20S proteasome proteolysis activity. Functionally, component of the proteasome core, a large protease complex with broad specificity involved in protein degradation. The sequence is that of Proteasome subunit beta from Methanobrevibacter ruminantium (strain ATCC 35063 / DSM 1093 / JCM 13430 / OCM 146 / M1) (Methanobacterium ruminantium).